A 41-amino-acid polypeptide reads, in one-letter code: Photosystem I reaction center subunit IX (41 aa).

A helical transmembrane segment spans residues Y7 to I27.

The protein belongs to the PsaJ family.

Its subcellular location is the plastid. The protein localises to the chloroplast thylakoid membrane. May help in the organization of the PsaE and PsaF subunits. The protein is Photosystem I reaction center subunit IX of Tupiella akineta (Green alga).